Here is a 487-residue protein sequence, read N- to C-terminus: Calcium-dependent mitochondrial ATP-magnesium/phosphate carrier protein 2 (487 aa).

Topologically, residues 1–211 (MEATKSSKQN…ISKHIKRSNY (211 aa)) are mitochondrial intermembrane. EF-hand domains lie at 36–71 (ERDL…LQIP), 72–107 (SGYK…KELE), 108–138 (LYRI…AGIE), and 139–174 (IKDE…YPHE). Residues Asp85, Asn87, Asp89, Arg91, and Glu96 each coordinate Ca(2+). Ca(2+)-binding residues include Asp152, Asp154, Asp156, and Glu163. Solcar repeat units follow at residues 206–289 (IKRS…FKNA), 301–389 (IGTT…LKDL), and 400–483 (PGPL…MKKS). A helical transmembrane segment spans residues 212–229 (FIAGGIAGAASRTATAPL). Residues 230–263 (DRLKVLLQIQKTDARIREAIKLIWKQGGVRGFFR) are Mitochondrial matrix-facing. The chain crosses the membrane as a helical span at residues 264–283 (GNGLNIVKVAPESAIKFYAY). The Mitochondrial intermembrane segment spans residues 284-310 (ELFKNAIGENMGEDKADIGTTVRLFAG). Residues 311-324 (GMAGAVAQASIYPL) traverse the membrane as a helical segment. Topologically, residues 325–363 (DLVKTRLQTYTSQAGVAVPRLGTLTKDILVHEGPRAFYK) are mitochondrial matrix. The chain crosses the membrane as a helical span at residues 364 to 383 (GLFPSLLGIIPYAGIDLAAY). The Mitochondrial intermembrane segment spans residues 384–405 (ETLKDLSRTYILQDAEPGPLVQ). The helical transmembrane segment at 406–423 (LGCGTISGALGATCVYPL) threads the bilayer. Residues 424–457 (QVVRTRMQAERARTSMSGVFRRTISEEGYRALYK) lie on the Mitochondrial matrix side of the membrane. Residues 458 to 477 (GLLPNLLKVVPAASITYMVY) traverse the membrane as a helical segment. Residues 478–487 (EAMKKSLELD) lie on the Mitochondrial intermembrane side of the membrane.

Belongs to the mitochondrial carrier (TC 2.A.29) family. In terms of tissue distribution, expressed in flowers, leaves, stems, roots and seedlings, mostly in aerial parts.

The protein localises to the mitochondrion inner membrane. Counter-exchange transport activity is saturable and inhibited by pyridoxal-5'-phosphate, EDTA and EGTA. Activated by calcium Ca(2+) and manganese Mn(2+) ions, and slightly by iron Fe(2+) and zinc Zn(2+) ions. Repressed by copper ions Cu(2+) and slightly by magnesium Mg(2+) ions. Magnesium Mg(2+) ions promotes slightly ATP uptake, ATP-Mg(2+) being exchanged with ATP(4-). Its function is as follows. Calcium-dependent mitochondrial carrier protein that catalyzes the import of ATP co-transported with metal divalent cations across the mitochondrial inner membrane in exchange for phosphate (Pi). Can transport phosphate, AMP, ADP, ATP, adenosine 5'-phosphosulfate, sulfate and thiosulfate, and, to a lesser extent, other nucleotides. Binds calcium ions Ca(2+). Also mediates calcium uptake. The protein is Calcium-dependent mitochondrial ATP-magnesium/phosphate carrier protein 2 of Arabidopsis thaliana (Mouse-ear cress).